We begin with the raw amino-acid sequence, 375 residues long: PqqA peptide cyclase (375 aa).

The Radical SAM core domain maps to 18–235; sequence ILPPMAMLAE…EAREKYQGIL (218 aa). Positions 32, 36, and 39 each coordinate [4Fe-4S] cluster.

This sequence belongs to the radical SAM superfamily. PqqE family. Interacts with PqqD. The interaction is necessary for activity of PqqE. [4Fe-4S] cluster is required as a cofactor.

It catalyses the reaction [PQQ precursor protein] + S-adenosyl-L-methionine = E-Y cross-linked-[PQQ precursor protein] + 5'-deoxyadenosine + L-methionine + H(+). Its pathway is cofactor biosynthesis; pyrroloquinoline quinone biosynthesis. Its function is as follows. Catalyzes the cross-linking of a glutamate residue and a tyrosine residue in the PqqA protein as part of the biosynthesis of pyrroloquinoline quinone (PQQ). In Rhizobium meliloti (strain 1021) (Ensifer meliloti), this protein is PqqA peptide cyclase.